The sequence spans 353 residues: Protein MGF 360-10L (353 aa).

One copy of the ANK repeat lies at 57–89 (DLNTALMLATKENNYQLIKLFTEWGADINYGLI). Asparagine 172 is a glycosylation site (N-linked (GlcNAc...) asparagine; by host). 2 helical membrane-spanning segments follow: residues 206 to 228 (LNTW…NLYE) and 249 to 271 (NFLT…IASI). A glycan (N-linked (GlcNAc...) asparagine; by host) is linked at asparagine 342.

This sequence belongs to the asfivirus MGF 360 family.

Its subcellular location is the host membrane. Its function is as follows. Plays a role in virus cell tropism, and may be required for efficient virus replication in macrophages. This African swine fever virus (isolate Warthog/Namibia/Wart80/1980) (ASFV) protein is Protein MGF 360-10L.